We begin with the raw amino-acid sequence, 179 residues long: Probable inosine/xanthosine triphosphatase (179 aa).

S13 to K18 is a binding site for substrate. A Mg(2+)-binding site is contributed by Q70.

The protein belongs to the YjjX NTPase family. Homodimer. Mg(2+) is required as a cofactor. The cofactor is Mn(2+).

The catalysed reaction is XTP + H2O = XDP + phosphate + H(+). It carries out the reaction ITP + H2O = IDP + phosphate + H(+). In terms of biological role, phosphatase that hydrolyzes non-canonical purine nucleotides such as XTP and ITP to their respective diphosphate derivatives. Probably excludes non-canonical purines from DNA/RNA precursor pool, thus preventing their incorporation into DNA/RNA and avoiding chromosomal lesions. The sequence is that of Probable inosine/xanthosine triphosphatase from Methanocaldococcus jannaschii (strain ATCC 43067 / DSM 2661 / JAL-1 / JCM 10045 / NBRC 100440) (Methanococcus jannaschii).